The following is a 318-amino-acid chain: Protein-L-histidine N-pros-methyltransferase (318 aa).

Residues 1 to 18 (MRLLAGWLCLSLASVWLA) form the signal peptide. N-linked (GlcNAc...) asparagine glycosylation occurs at Asn-35. S-adenosyl-L-homocysteine contacts are provided by Glu-174, Asn-210, and Tyr-295.

Belongs to the METTL9 family.

The protein localises to the endoplasmic reticulum. Its subcellular location is the mitochondrion. The enzyme catalyses L-histidyl-[protein] + S-adenosyl-L-methionine = N(pros)-methyl-L-histidyl-[protein] + S-adenosyl-L-homocysteine + H(+). Protein-histidine N-methyltransferase that specifically catalyzes 1-methylhistidine (pros-methylhistidine) methylation of target proteins. Specifically methylates the second His of proteins with a His-x-His (HxH) motif (where 'x' is preferably a small amino acid), while exploiting the first one as a recognition signature. Catalyzes methylation of target proteins such as S100A9, NDUFB3, SLC39A5, SLC39A7, ARMC6 and DNAJB12; 1-methylhistidine modification may affect the binding of zinc and other metals to its target proteins. Constitutes the main methyltransferase for the 1-methylhistidine modification in cell. This is Protein-L-histidine N-pros-methyltransferase from Homo sapiens (Human).